A 154-amino-acid chain; its full sequence is Prefoldin subunit 2 (154 aa).

2 disordered regions span residues 1–20 and 126–154; these read MADSSGRVGKSGGSGTGKGA and LMGEDEKPAAKENSEGAGAKSSSAGVLVS. Residues 9–18 are compositionally biased toward gly residues; it reads GKSGGSGTGK. Over residues 126 to 139 the composition is skewed to basic and acidic residues; that stretch reads LMGEDEKPAAKENS. Over residues 141–154 the composition is skewed to low complexity; it reads GAGAKSSSAGVLVS.

The protein belongs to the prefoldin subunit beta family. As to quaternary structure, heterohexamer of two PFD-alpha type and four PFD-beta type subunits. Component of the PAQosome complex which is responsible for the biogenesis of several protein complexes and which consists of R2TP complex members RUVBL1, RUVBL2, RPAP3 and PIH1D1, URI complex members PFDN2, PFDN6, PDRG1, UXT and URI1 as well as ASDURF, POLR2E and DNAAF10/WDR92. Interacts with URI1; the interaction is phosphorylation-dependent and occurs in a growth-dependent manner.

Its subcellular location is the nucleus. The protein localises to the cytoplasm. It localises to the mitochondrion. Its function is as follows. Binds specifically to cytosolic chaperonin (c-CPN) and transfers target proteins to it. Binds to nascent polypeptide chain and promotes folding in an environment in which there are many competing pathways for nonnative proteins. This is Prefoldin subunit 2 (Pfdn2) from Rattus norvegicus (Rat).